Consider the following 536-residue polypeptide: CTP synthase (536 aa).

The segment at 1-268 is amidoligase domain; sequence MKSKFIFITG…GKVLCKLFNI (268 aa). Ser14 provides a ligand contact to CTP. Ser14 serves as a coordination point for UTP. 15 to 20 contacts ATP; sequence SLGKGL. Tyr55 is an L-glutamine binding site. Asp72 serves as a coordination point for ATP. Mg(2+) contacts are provided by Asp72 and Glu142. Residues 149–151, 189–194, and Lys225 each bind CTP; these read DIE and KTKPMQ. UTP contacts are provided by residues 189–194 and Lys225; that span reads KTKPMQ. The Glutamine amidotransferase type-1 domain occupies 293-535; the sequence is TIALVGKYVE…IKAAVDNKIN (243 aa). Gly356 is a binding site for L-glutamine. Cys383 functions as the Nucleophile; for glutamine hydrolysis in the catalytic mechanism. Residues 384 to 387, Glu407, and Arg463 each bind L-glutamine; that span reads LGMQ. Active-site residues include His508 and Glu510.

The protein belongs to the CTP synthase family. Homotetramer.

The enzyme catalyses UTP + L-glutamine + ATP + H2O = CTP + L-glutamate + ADP + phosphate + 2 H(+). The catalysed reaction is L-glutamine + H2O = L-glutamate + NH4(+). It catalyses the reaction UTP + NH4(+) + ATP = CTP + ADP + phosphate + 2 H(+). It participates in pyrimidine metabolism; CTP biosynthesis via de novo pathway; CTP from UDP: step 2/2. With respect to regulation, allosterically activated by GTP, when glutamine is the substrate; GTP has no effect on the reaction when ammonia is the substrate. The allosteric effector GTP functions by stabilizing the protein conformation that binds the tetrahedral intermediate(s) formed during glutamine hydrolysis. Inhibited by the product CTP, via allosteric rather than competitive inhibition. Its function is as follows. Catalyzes the ATP-dependent amination of UTP to CTP with either L-glutamine or ammonia as the source of nitrogen. Regulates intracellular CTP levels through interactions with the four ribonucleotide triphosphates. This is CTP synthase from Treponema denticola (strain ATCC 35405 / DSM 14222 / CIP 103919 / JCM 8153 / KCTC 15104).